The chain runs to 377 residues: Nitric oxide reductase FlRd-NAD(+) reductase (377 aa).

This sequence belongs to the FAD-dependent oxidoreductase family. FAD is required as a cofactor.

The protein localises to the cytoplasm. It carries out the reaction 2 reduced [nitric oxide reductase rubredoxin domain] + NAD(+) + H(+) = 2 oxidized [nitric oxide reductase rubredoxin domain] + NADH. The protein operates within nitrogen metabolism; nitric oxide reduction. Its function is as follows. One of at least two accessory proteins for anaerobic nitric oxide (NO) reductase. Reduces the rubredoxin moiety of NO reductase. In Escherichia coli O9:H4 (strain HS), this protein is Nitric oxide reductase FlRd-NAD(+) reductase.